A 326-amino-acid chain; its full sequence is MNNTDIKLVSVVIPVYNEEASLPALLSRVTAACDQLSQNYEVILIDDGSHDGSTELIRDAAAVEGSKLVGVLLNRNYGQHAAIMAGFETAKGDLVITLDADLQNPPEEIPRLVEAAMQGYDVVGTMRRNRQDSWFRKTASKLINKSVQKATGVHMSDYGCMLRAYRRHIIDAMLCCQERSTFIPILANSFARRTIELEVGHAERAHGESKYGLMHLINLMYDLVTCMTTTPLRLLSIVGSVVAGIGFTFSILLILMRLILGADWAADGVFTLFAILFTFVGVQLLGMGLLGEYIGRMYTDVRARPRYFIHQIVRSATTPSQQEAEQ.

Helical transmembrane passes span 234 to 254 (LLSI…ILLI) and 269 to 289 (VFTL…GMGL).

Belongs to the glycosyltransferase 2 family.

Its subcellular location is the cell inner membrane. It carries out the reaction UDP-4-deoxy-4-formamido-beta-L-arabinose + di-trans,octa-cis-undecaprenyl phosphate = 4-deoxy-4-formamido-alpha-L-arabinopyranosyl di-trans,octa-cis-undecaprenyl phosphate + UDP. The protein operates within glycolipid biosynthesis; 4-amino-4-deoxy-alpha-L-arabinose undecaprenyl phosphate biosynthesis; 4-amino-4-deoxy-alpha-L-arabinose undecaprenyl phosphate from UDP-4-deoxy-4-formamido-beta-L-arabinose and undecaprenyl phosphate: step 1/2. Its pathway is bacterial outer membrane biogenesis; lipopolysaccharide biosynthesis. Functionally, catalyzes the transfer of 4-deoxy-4-formamido-L-arabinose from UDP to undecaprenyl phosphate. The modified arabinose is attached to lipid A and is required for resistance to polymyxin and cationic antimicrobial peptides. The chain is Undecaprenyl-phosphate 4-deoxy-4-formamido-L-arabinose transferase from Aeromonas hydrophila subsp. hydrophila (strain ATCC 7966 / DSM 30187 / BCRC 13018 / CCUG 14551 / JCM 1027 / KCTC 2358 / NCIMB 9240 / NCTC 8049).